The sequence spans 432 residues: Enolase (432 aa).

Glutamine 167 contributes to the (2R)-2-phosphoglycerate binding site. Glutamate 209 (proton donor) is an active-site residue. Mg(2+) is bound by residues aspartate 246, glutamate 291, and aspartate 318. (2R)-2-phosphoglycerate contacts are provided by lysine 343, arginine 372, serine 373, and lysine 394. Lysine 343 acts as the Proton acceptor in catalysis.

It belongs to the enolase family. Component of the RNA degradosome, a multiprotein complex involved in RNA processing and mRNA degradation. The cofactor is Mg(2+).

Its subcellular location is the cytoplasm. The protein localises to the secreted. It is found in the cell surface. It carries out the reaction (2R)-2-phosphoglycerate = phosphoenolpyruvate + H2O. The protein operates within carbohydrate degradation; glycolysis; pyruvate from D-glyceraldehyde 3-phosphate: step 4/5. Its function is as follows. Catalyzes the reversible conversion of 2-phosphoglycerate (2-PG) into phosphoenolpyruvate (PEP). It is essential for the degradation of carbohydrates via glycolysis. The chain is Enolase from Aliivibrio salmonicida (strain LFI1238) (Vibrio salmonicida (strain LFI1238)).